We begin with the raw amino-acid sequence, 338 residues long: MTDYVTDIAVIGAGPVGIFTVFQAGMLKMRCCVIDALSEIGGQCLALYPEKPIYDIPGYPVINGKELIDSLKKQSEPFNPQYLLGQVAEKIEDYSDYFLIRTTTGIVVQSKVIIIAAGAGAFGPNRLPIDNILDYENKSVFYQVRKVSDFCDKNIMIAGGGDSAADWAVELSKVAKQLYVVHRRKNFRCAPNTALQMDNLSQSGKIKIIVPYQVKKLCGENGKLHSVIVKNITNHEEMALQVDYLFPFFGTSANLGPILNWGMEVKNYQILVNAETCLTNRNRIYAVGDIATYPGKLKLILTGFSEAAMACHHIYHVIYPNSPLNFQYSTSKGIPENC.

7 residues coordinate FAD: Asp35, Gln43, Tyr48, Ala88, Phe122, Asp289, and Thr330.

It belongs to the ferredoxin--NADP reductase type 2 family. In terms of assembly, homodimer. The cofactor is FAD.

The catalysed reaction is 2 reduced [2Fe-2S]-[ferredoxin] + NADP(+) + H(+) = 2 oxidized [2Fe-2S]-[ferredoxin] + NADPH. This is Ferredoxin--NADP reductase from Ehrlichia chaffeensis (strain ATCC CRL-10679 / Arkansas).